The following is a 541-amino-acid chain: MSRLTDLPAWQALEDHYYELQGTHLRELFAADPERGEKMNAEGAGLYLDYSKHRVTDETLRLLRELAQATGVEARRDAMFRGEKINVTEGRAVLHTALRAPRDAVIEVDGKNVVPEVHEVLDRMATFADAVRSGEWLGYTGKPIKNIVNIGIGGSDLGPVMAYEALKHYAQRDLTVRFVSNVDGTDLTEKTRDLDPEVTLFIVSSKTFTTQETMTNARSARKWLLGSLKDDAAVTRHFVAVSTNAEEVQKFGIDTANMFGFWDWVGGRYSMDSAIGLSLMVAVGPEHFREMLAGFHDMDEHFRTAPAEQNLPMLMGLLGVWYGDFFGAESLAVLPYDQYLASFPAYLQQLDMESNGKHVTLGGEPVDYQTGPIVWGQAGTNGQHAFYQLIHQGTKLIPCDFIGFCQTLNPLPPHHDLLMANVFAQTEALAFGKTLEQVLADGVAPEVAPHRVFEGNRPTSTILADRLTPRTLGALIALYEHKVFVQGAVWDINSFDQWGVELGKVLAKKIDGELQSEGEPELQHDSSTNALIRRYRARRQG.

The active-site Proton donor is E353. Residues H384 and K504 contribute to the active site.

Belongs to the GPI family.

The protein localises to the cytoplasm. It carries out the reaction alpha-D-glucose 6-phosphate = beta-D-fructose 6-phosphate. It participates in carbohydrate biosynthesis; gluconeogenesis. Its pathway is carbohydrate degradation; glycolysis; D-glyceraldehyde 3-phosphate and glycerone phosphate from D-glucose: step 2/4. Catalyzes the reversible isomerization of glucose-6-phosphate to fructose-6-phosphate. The sequence is that of Glucose-6-phosphate isomerase from Deinococcus radiodurans (strain ATCC 13939 / DSM 20539 / JCM 16871 / CCUG 27074 / LMG 4051 / NBRC 15346 / NCIMB 9279 / VKM B-1422 / R1).